The sequence spans 454 residues: tRNA modification GTPase MnmE (454 aa).

Positions 23, 80, and 120 each coordinate (6S)-5-formyl-5,6,7,8-tetrahydrofolate. Residues 216 to 377 (GMKVVIAGRP…LRDHLKSSMG (162 aa)) enclose the TrmE-type G domain. Asn-226 provides a ligand contact to K(+). GTP-binding positions include 226–231 (NAGKSS), 245–251 (TDIAGTT), 270–273 (DTAG), 335–338 (NKAD), and 358–360 (SAR). Ser-230 provides a ligand contact to Mg(2+). Thr-245, Ile-247, and Thr-250 together coordinate K(+). Thr-251 is a binding site for Mg(2+). (6S)-5-formyl-5,6,7,8-tetrahydrofolate is bound at residue Lys-454.

This sequence belongs to the TRAFAC class TrmE-Era-EngA-EngB-Septin-like GTPase superfamily. TrmE GTPase family. In terms of assembly, homodimer. Heterotetramer of two MnmE and two MnmG subunits. K(+) serves as cofactor.

The protein localises to the cytoplasm. Exhibits a very high intrinsic GTPase hydrolysis rate. Involved in the addition of a carboxymethylaminomethyl (cmnm) group at the wobble position (U34) of certain tRNAs, forming tRNA-cmnm(5)s(2)U34. The sequence is that of tRNA modification GTPase MnmE from Erwinia tasmaniensis (strain DSM 17950 / CFBP 7177 / CIP 109463 / NCPPB 4357 / Et1/99).